Here is a 124-residue protein sequence, read N- to C-terminus: Sporulation initiation phosphotransferase F (124 aa).

Residues 5-119 (KILIVDDQYG…EIRDAVKKYL (115 aa)) form the Response regulatory domain. Mg(2+) contacts are provided by D10, D11, D54, and K56. At D54 the chain carries 4-aspartylphosphate.

It depends on Mg(2+) as a cofactor. In terms of processing, phosphorylated by KinA and KinB. Dephosphorylated by RapA and RapB.

The protein resides in the cytoplasm. Its function is as follows. Key element in the phosphorelay regulating sporulation initiation. Phosphorylation of spo0B during sporulation initiation. This Bacillus subtilis (strain 168) protein is Sporulation initiation phosphotransferase F (spo0F).